A 596-amino-acid polypeptide reads, in one-letter code: Actin-related protein 9 (596 aa).

Residues 148-178 (LASPAETSPDKGDASASEAVPDVTDSKDTSE) are disordered.

Belongs to the actin family. ARP8 subfamily.

This chain is Actin-related protein 9 (ARP9), found in Arabidopsis thaliana (Mouse-ear cress).